The following is a 205-amino-acid chain: MIGKLRGLIDSYAEDFVIIDVGGVGYQVHCSARTLQALPSPGEAATLSIETYVREDQIKLFGFRSDVEREWFRLLQTVQGVGAKVALAVLGTLPPADLGNAIALRDKAAVARTPGVGPKVAERIVTELKDKAPAFANVDPGVVRLSGAIEESRAPQPVADAISALINLGYGQPQAAAAIAAASRAAGDKAETAQLIRLGLKELAK.

The domain I stretch occupies residues 1–64 (MIGKLRGLID…EDQIKLFGFR (64 aa)). The tract at residues 65–143 (SDVEREWFRL…AFANVDPGVV (79 aa)) is domain II. Positions 144–154 (RLSGAIEESRA) are flexible linker. Residues 154 to 205 (APQPVADAISALINLGYGQPQAAAAIAAASRAAGDKAETAQLIRLGLKELAK) form a domain III region.

It belongs to the RuvA family. Homotetramer. Forms an RuvA(8)-RuvB(12)-Holliday junction (HJ) complex. HJ DNA is sandwiched between 2 RuvA tetramers; dsDNA enters through RuvA and exits via RuvB. An RuvB hexamer assembles on each DNA strand where it exits the tetramer. Each RuvB hexamer is contacted by two RuvA subunits (via domain III) on 2 adjacent RuvB subunits; this complex drives branch migration. In the full resolvosome a probable DNA-RuvA(4)-RuvB(12)-RuvC(2) complex forms which resolves the HJ.

Its subcellular location is the cytoplasm. The RuvA-RuvB-RuvC complex processes Holliday junction (HJ) DNA during genetic recombination and DNA repair, while the RuvA-RuvB complex plays an important role in the rescue of blocked DNA replication forks via replication fork reversal (RFR). RuvA specifically binds to HJ cruciform DNA, conferring on it an open structure. The RuvB hexamer acts as an ATP-dependent pump, pulling dsDNA into and through the RuvAB complex. HJ branch migration allows RuvC to scan DNA until it finds its consensus sequence, where it cleaves and resolves the cruciform DNA. The protein is Holliday junction branch migration complex subunit RuvA of Bradyrhizobium sp. (strain ORS 278).